Consider the following 360-residue polypeptide: Pyrimidine monooxygenase RutA (360 aa).

Residues 49-50 (IK), Asn115, Glu124, 140-141 (RY), and Ser190 each bind FMN.

The protein belongs to the NtaA/SnaA/DszA monooxygenase family. RutA subfamily.

The catalysed reaction is uracil + FMNH2 + NADH + O2 = (Z)-3-ureidoacrylate + FMN + NAD(+) + H2O + H(+). It catalyses the reaction thymine + FMNH2 + NADH + O2 = (Z)-2-methylureidoacrylate + FMN + NAD(+) + H2O + H(+). Catalyzes the pyrimidine ring opening between N-3 and C-4 by an unusual flavin hydroperoxide-catalyzed mechanism, adding oxygen atoms in the process to yield ureidoacrylate peracid, that immediately reacts with FMN forming ureidoacrylate and FMN-N(5)-oxide. The FMN-N(5)-oxide reacts spontaneously with NADH to produce FMN. Requires the flavin reductase RutF to regenerate FMN in vivo. The protein is Pyrimidine monooxygenase RutA of Stutzerimonas stutzeri (strain A1501) (Pseudomonas stutzeri).